A 394-amino-acid polypeptide reads, in one-letter code: Ornithine aminotransferase 1 (394 aa).

Lys-252 carries the N6-(pyridoxal phosphate)lysine modification.

Belongs to the class-III pyridoxal-phosphate-dependent aminotransferase family. OAT subfamily. It depends on pyridoxal 5'-phosphate as a cofactor.

The protein resides in the cytoplasm. The enzyme catalyses a 2-oxocarboxylate + L-ornithine = L-glutamate 5-semialdehyde + an L-alpha-amino acid. It participates in amino-acid biosynthesis; L-proline biosynthesis; L-glutamate 5-semialdehyde from L-ornithine: step 1/1. Functionally, catalyzes the interconversion of ornithine to glutamate semialdehyde. The protein is Ornithine aminotransferase 1 of Staphylococcus aureus (strain COL).